The chain runs to 217 residues: Large ribosomal subunit protein uL3 (217 aa).

Belongs to the universal ribosomal protein uL3 family. Part of the 50S ribosomal subunit. Forms a cluster with proteins L14 and L19.

In terms of biological role, one of the primary rRNA binding proteins, it binds directly near the 3'-end of the 23S rRNA, where it nucleates assembly of the 50S subunit. This is Large ribosomal subunit protein uL3 from Mycobacterium sp. (strain KMS).